Reading from the N-terminus, the 293-residue chain is tRNA pseudouridine synthase B (293 aa).

The active-site Nucleophile is D39.

It belongs to the pseudouridine synthase TruB family. Type 1 subfamily.

The catalysed reaction is uridine(55) in tRNA = pseudouridine(55) in tRNA. In terms of biological role, responsible for synthesis of pseudouridine from uracil-55 in the psi GC loop of transfer RNAs. This is tRNA pseudouridine synthase B from Rickettsia bellii (strain RML369-C).